Reading from the N-terminus, the 741-residue chain is NAD(P)H-quinone oxidoreductase subunit 5, chloroplastic (741 aa).

Transmembrane regions (helical) follow at residues 9 to 29, 39 to 59, 89 to 109, 125 to 145, 147 to 167, 185 to 205, 219 to 239, 258 to 278, 280 to 300, 327 to 347, 354 to 374, 396 to 416, 425 to 445, 542 to 562, 605 to 625, and 721 to 741; these read WVIP…LFFI, IWAF…IQLS, IDPL…LVLI, FVYI…SNLI, IYFF…FWFT, GDFG…SLEF, NGIN…GAVA, TPIS…FLLA, LFPL…VGTI, LGYM…FHLI, ALLF…VGYS, TTFL…CFWS, WLYS…TAFY, LFPL…GISF, AISS…LYGS, and ISSY…FFIS.

Belongs to the complex I subunit 5 family. In terms of assembly, NDH is composed of at least 16 different subunits, 5 of which are encoded in the nucleus.

The protein resides in the plastid. It localises to the chloroplast thylakoid membrane. It carries out the reaction a plastoquinone + NADH + (n+1) H(+)(in) = a plastoquinol + NAD(+) + n H(+)(out). The enzyme catalyses a plastoquinone + NADPH + (n+1) H(+)(in) = a plastoquinol + NADP(+) + n H(+)(out). In terms of biological role, NDH shuttles electrons from NAD(P)H:plastoquinone, via FMN and iron-sulfur (Fe-S) centers, to quinones in the photosynthetic chain and possibly in a chloroplast respiratory chain. The immediate electron acceptor for the enzyme in this species is believed to be plastoquinone. Couples the redox reaction to proton translocation, and thus conserves the redox energy in a proton gradient. This chain is NAD(P)H-quinone oxidoreductase subunit 5, chloroplastic (ndhF), found in Lolium perenne (Perennial ryegrass).